The following is a 282-amino-acid chain: tRNA uridine(34) hydroxylase (282 aa).

Residues E128–Y222 form the Rhodanese domain. The Cysteine persulfide intermediate role is filled by C182.

It belongs to the TrhO family.

The catalysed reaction is uridine(34) in tRNA + AH2 + O2 = 5-hydroxyuridine(34) in tRNA + A + H2O. In terms of biological role, catalyzes oxygen-dependent 5-hydroxyuridine (ho5U) modification at position 34 in tRNAs. In Cupriavidus necator (strain ATCC 17699 / DSM 428 / KCTC 22496 / NCIMB 10442 / H16 / Stanier 337) (Ralstonia eutropha), this protein is tRNA uridine(34) hydroxylase.